A 345-amino-acid polypeptide reads, in one-letter code: Putative RING-H2 finger protein ATL36 (345 aa).

The N-terminal stretch at 1 to 31 is a signal peptide; it reads MNIFTRYHLPRVVSGVILPLFLFHLLPYVTC. A helical membrane pass occupies residues 50–70; that stretch reads SIIAIVVLAIFISLGMVSCCL. The RING-type; atypical zinc finger occupies 123–165; the sequence is CAICLSEFEDQETLRWMPPCSHTFHANCIDVWLSSWSTCPVCR. Ser-264 carries the post-translational modification Phosphoserine.

Belongs to the RING-type zinc finger family. ATL subfamily.

It is found in the membrane. It catalyses the reaction S-ubiquitinyl-[E2 ubiquitin-conjugating enzyme]-L-cysteine + [acceptor protein]-L-lysine = [E2 ubiquitin-conjugating enzyme]-L-cysteine + N(6)-ubiquitinyl-[acceptor protein]-L-lysine.. It functions in the pathway protein modification; protein ubiquitination. The chain is Putative RING-H2 finger protein ATL36 (ATL36) from Arabidopsis thaliana (Mouse-ear cress).